We begin with the raw amino-acid sequence, 391 residues long: S-adenosylmethionine synthase (391 aa).

His-14 is a binding site for ATP. Asp-16 lines the Mg(2+) pocket. K(+) is bound at residue Glu-42. 2 residues coordinate L-methionine: Glu-55 and Gln-98. The interval 98 to 108 is flexible loop; the sequence is QSVDIAMGVDE. Residues 172 to 174, 238 to 239, Asp-247, 253 to 254, Ala-270, and Lys-274 each bind ATP; these read DGK, RF, and RK. L-methionine is bound at residue Asp-247. Residue Lys-278 coordinates L-methionine.

It belongs to the AdoMet synthase family. Homotetramer; dimer of dimers. Mg(2+) serves as cofactor. It depends on K(+) as a cofactor.

Its subcellular location is the cytoplasm. It carries out the reaction L-methionine + ATP + H2O = S-adenosyl-L-methionine + phosphate + diphosphate. Its pathway is amino-acid biosynthesis; S-adenosyl-L-methionine biosynthesis; S-adenosyl-L-methionine from L-methionine: step 1/1. Its function is as follows. Catalyzes the formation of S-adenosylmethionine (AdoMet) from methionine and ATP. The overall synthetic reaction is composed of two sequential steps, AdoMet formation and the subsequent tripolyphosphate hydrolysis which occurs prior to release of AdoMet from the enzyme. The chain is S-adenosylmethionine synthase from Clostridium botulinum (strain Kyoto / Type A2).